The chain runs to 352 residues: Peptide chain release factor 1 (352 aa).

Q233 bears the N5-methylglutamine mark. Residues 288–309 form a disordered region; it reads NAKDRKEQVGSGDRSERIRTYN. Over residues 289-306 the composition is skewed to basic and acidic residues; the sequence is AKDRKEQVGSGDRSERIR.

It belongs to the prokaryotic/mitochondrial release factor family. In terms of processing, methylated by PrmC. Methylation increases the termination efficiency of RF1.

The protein resides in the cytoplasm. Functionally, peptide chain release factor 1 directs the termination of translation in response to the peptide chain termination codons UAG and UAA. This chain is Peptide chain release factor 1, found in Helicobacter acinonychis (strain Sheeba).